Here is a 407-residue protein sequence, read N- to C-terminus: 1-deoxy-D-xylulose 5-phosphate reductoisomerase (407 aa).

6 residues coordinate NADPH: T25, G26, S27, I28, N53, and N136. 1-deoxy-D-xylulose 5-phosphate is bound at residue K137. E138 serves as a coordination point for NADPH. D162 contributes to the Mn(2+) binding site. 1-deoxy-D-xylulose 5-phosphate contacts are provided by S163, E164, S188, and H211. Residue E164 coordinates Mn(2+). Position 217 (G217) interacts with NADPH. 1-deoxy-D-xylulose 5-phosphate-binding residues include S224, N229, K230, and E233. Residue E233 participates in Mn(2+) binding.

The protein belongs to the DXR family. It depends on Mg(2+) as a cofactor. Mn(2+) serves as cofactor.

It carries out the reaction 2-C-methyl-D-erythritol 4-phosphate + NADP(+) = 1-deoxy-D-xylulose 5-phosphate + NADPH + H(+). It participates in isoprenoid biosynthesis; isopentenyl diphosphate biosynthesis via DXP pathway; isopentenyl diphosphate from 1-deoxy-D-xylulose 5-phosphate: step 1/6. In terms of biological role, catalyzes the NADPH-dependent rearrangement and reduction of 1-deoxy-D-xylulose-5-phosphate (DXP) to 2-C-methyl-D-erythritol 4-phosphate (MEP). The polypeptide is 1-deoxy-D-xylulose 5-phosphate reductoisomerase (Bradyrhizobium sp. (strain BTAi1 / ATCC BAA-1182)).